We begin with the raw amino-acid sequence, 678 residues long: Protein CASP (678 aa).

The Cytoplasmic portion of the chain corresponds to Met1 to Thr619. 2 coiled-coil regions span residues Leu67 to Ser450 and Leu502 to Ser556. The residue at position 586 (Ser586) is a Phosphoserine. Residues Ile620–Ala640 form a helical; Anchor for type IV membrane protein membrane-spanning segment. The Lumenal segment spans residues Trp641–Gln678.

The protein belongs to the CASP family. In terms of assembly, homodimer; disulfide-linked. Interacts with GOLGA5.

Its subcellular location is the golgi apparatus membrane. Its function is as follows. May be involved in intra-Golgi retrograde transport. The polypeptide is Protein CASP (CUTL1) (Pongo abelii (Sumatran orangutan)).